We begin with the raw amino-acid sequence, 260 residues long: Multiple myeloma tumor-associated protein 2 homolog (260 aa).

Gly residues predominate over residues 1 to 11 (MFGSNRGGVRG). Residues 1–21 (MFGSNRGGVRGGQDQFNWEDV) are disordered. Glycyl lysine isopeptide (Lys-Gly) (interchain with G-Cter in SUMO2) cross-links involve residues K22, K104, and K113. Basic and acidic residues predominate over residues 106 to 116 (EGGDPEEKGVD). Disordered stretches follow at residues 106–133 (EGGDPEEKGVDRLLGLGSASGSAGRVAL) and 146–260 (SVFT…SSDD). Residues 117–132 (RLLGLGSASGSAGRVA) are compositionally biased toward low complexity. 2 positions are modified to phosphoserine: S123 and S127. Over residues 170–182 (RAEDKVEPDAESH) the composition is skewed to basic and acidic residues. Over residues 183–206 (KKSKKEKKKKKKKHKKHKKKKDKE) the composition is skewed to basic residues. Phosphoserine occurs at positions 215, 216, and 219.

This is Multiple myeloma tumor-associated protein 2 homolog (Mmtag2) from Mus musculus (Mouse).